A 428-amino-acid chain; its full sequence is ATP-dependent RNA helicase RhlB (428 aa).

The short motif at 9 to 37 (KKFSDFALHPKVIEALDNKGFSNCTPIQA) is the Q motif element. Residues 40–219 (LPFTVEGRDV…FEQMNHAEYI (180 aa)) enclose the Helicase ATP-binding domain. 53–60 (AQTGTGKT) contacts ATP. Residues 165 to 168 (DEAD) carry the DEAD box motif. The region spanning 245–390 (RLLQTLLEEE…VSKYNSQALL (146 aa)) is the Helicase C-terminal domain. Residues 392–428 (DLPAPKRRYRSRSGNHQRRNNLSHRNNTPRNNRKRSG) are disordered. The segment covering 396–413 (PKRRYRSRSGNHQRRNNL) has biased composition (basic residues).

Belongs to the DEAD box helicase family. RhlB subfamily. As to quaternary structure, component of the RNA degradosome, which is a multiprotein complex involved in RNA processing and mRNA degradation.

The protein resides in the cytoplasm. It catalyses the reaction ATP + H2O = ADP + phosphate + H(+). Its function is as follows. DEAD-box RNA helicase involved in RNA degradation. Has RNA-dependent ATPase activity and unwinds double-stranded RNA. This chain is ATP-dependent RNA helicase RhlB, found in Photorhabdus laumondii subsp. laumondii (strain DSM 15139 / CIP 105565 / TT01) (Photorhabdus luminescens subsp. laumondii).